A 442-amino-acid chain; its full sequence is tRNA modification GTPase MnmE (442 aa).

3 residues coordinate (6S)-5-formyl-5,6,7,8-tetrahydrofolate: Arg-24, Glu-82, and Lys-120. Residues 217 to 367 enclose the TrmE-type G domain; that stretch reads GLHIVITGEP…LISLIKKKAE (151 aa). GTP-binding positions include 227 to 232, 246 to 252, and 271 to 274; these read NVGKST, SEYAGTT, and DTAG. Ser-231 contributes to the Mg(2+) binding site. Position 246 (Ser-246) interacts with K(+). Mg(2+) is bound at residue Thr-252. Residue Lys-442 coordinates (6S)-5-formyl-5,6,7,8-tetrahydrofolate.

Belongs to the TRAFAC class TrmE-Era-EngA-EngB-Septin-like GTPase superfamily. TrmE GTPase family. As to quaternary structure, homodimer. Heterotetramer of two MnmE and two MnmG subunits. It depends on K(+) as a cofactor.

Its subcellular location is the cytoplasm. Exhibits a very high intrinsic GTPase hydrolysis rate. Involved in the addition of a carboxymethylaminomethyl (cmnm) group at the wobble position (U34) of certain tRNAs, forming tRNA-cmnm(5)s(2)U34. In Wolbachia pipientis subsp. Culex pipiens (strain wPip), this protein is tRNA modification GTPase MnmE.